The chain runs to 470 residues: Angiopoietin-related protein 6 (470 aa).

The signal sequence occupies residues 1–20 (MGKPWLRALQLLLLLGASWA). A glycan (N-linked (GlcNAc...) asparagine) is linked at Asn-58. Residues 59–116 (ASELAALRMRVGRHEELLRELQRLAAADGAVAGEVRALRKESRGLSARLGQLRAQLQH) adopt a coiled-coil conformation. An N-linked (GlcNAc...) (complex) asparagine glycan is attached at Asn-145. Positions 214-249 (SDTSRMLDPAPEPQRDQTQRQQEPMASPMPAGHPAV) are disordered. A Fibrinogen C-terminal domain is found at 251–469 (TKPVGPWQDC…KAAMLIRPLK (219 aa)). Cystine bridges form between Cys-260–Cys-287 and Cys-410–Cys-423.

The protein resides in the secreted. In terms of biological role, may play a role in the wound healing process. May promote epidermal proliferation, remodeling and regeneration. May promote the chemotactic activity of endothelial cells and induce neovascularization. May counteract high-fat diet-induced obesity and related insulin resistance through increased energy expenditure. In Homo sapiens (Human), this protein is Angiopoietin-related protein 6 (ANGPTL6).